We begin with the raw amino-acid sequence, 391 residues long: MTNNTKSITLNLGPQHPATHGVLRLILEMDGEVVNNADPHIGLLHRGTEKLIEHKTYLQAIPYFDRLDYVSPMCQEHAFALAAESLLECEIPRRAQFIRVLFSELTRILNHTLNIGSQALDVGATTPLLWLFEEREKIMEFYERVSGSRMHSNYFRPGGVAEDLPDGLLEDIDKFIQQFPPKLQDIENLLNENRLWKQRLVDIGVVSQKEAMDWGFSGPMLRGSGIAWDLRKSNPYDVYAEMDFEVPIGKNGDCYDRYLVRMLEMYESVKIIKQCIEKMPQGPVKTDDPKLTPPTRAKMKESMEAMIHHFKLYTEGYDVPAGEIYKAVEAPKGEFGVYLYSTGGNRPYRCRIKAPGFAHLQGLDFMSKGHLMADVITIIATLDIVFGEIDR.

Belongs to the complex I 49 kDa subunit family. NDH-1 is composed of 14 different subunits. Subunits NuoB, C, D, E, F, and G constitute the peripheral sector of the complex.

The protein resides in the cell inner membrane. It catalyses the reaction a quinone + NADH + 5 H(+)(in) = a quinol + NAD(+) + 4 H(+)(out). NDH-1 shuttles electrons from NADH, via FMN and iron-sulfur (Fe-S) centers, to quinones in the respiratory chain. The immediate electron acceptor for the enzyme in this species is believed to be ubiquinone. Couples the redox reaction to proton translocation (for every two electrons transferred, four hydrogen ions are translocated across the cytoplasmic membrane), and thus conserves the redox energy in a proton gradient. This Rickettsia bellii (strain OSU 85-389) protein is NADH-quinone oxidoreductase subunit D.